The primary structure comprises 273 residues: Glutamate 5-kinase (273 aa).

Lys-15 is an ATP binding site. Substrate-binding residues include Ser-55, Asp-142, and Asn-158. ATP-binding positions include 178–179 and 220–226; these read SD and TGGMLSK.

The protein belongs to the glutamate 5-kinase family.

It is found in the cytoplasm. The catalysed reaction is L-glutamate + ATP = L-glutamyl 5-phosphate + ADP. The protein operates within amino-acid biosynthesis; L-proline biosynthesis; L-glutamate 5-semialdehyde from L-glutamate: step 1/2. Catalyzes the transfer of a phosphate group to glutamate to form L-glutamate 5-phosphate. The sequence is that of Glutamate 5-kinase from Streptococcus pyogenes serotype M6 (strain ATCC BAA-946 / MGAS10394).